Here is a 216-residue protein sequence, read N- to C-terminus: MRIGILGGTFDPIHYGHIRPAIEVKHALALDKILLMPNHIPPHKHQPNLTTAQRLKMVADVCSQLDGFELCDIEAKRDTPSYTVVTLEQLKSLHPEHELFFIMGMDSFLQLKSWYEWQRLFDFAHLVVCQRPGWQLDAAHPMQQILTARSHAHQETHEGHAKNTHKNSGQIFPVTITPQDISSTQIREQLAKGEIPADLLMPITLDYIQNQRLYLP.

This sequence belongs to the NadD family.

It catalyses the reaction nicotinate beta-D-ribonucleotide + ATP + H(+) = deamido-NAD(+) + diphosphate. It functions in the pathway cofactor biosynthesis; NAD(+) biosynthesis; deamido-NAD(+) from nicotinate D-ribonucleotide: step 1/1. Functionally, catalyzes the reversible adenylation of nicotinate mononucleotide (NaMN) to nicotinic acid adenine dinucleotide (NaAD). The protein is Probable nicotinate-nucleotide adenylyltransferase of Shewanella baltica (strain OS185).